Here is a 161-residue protein sequence, read N- to C-terminus: UPF0225 protein NTHI0386 (161 aa).

This sequence belongs to the UPF0225 family.

This is UPF0225 protein NTHI0386 from Haemophilus influenzae (strain 86-028NP).